The following is a 219-amino-acid chain: Guanylate kinase (219 aa).

Residues 15–194 (GLMLVISSPS…AFSSVRAIVE (180 aa)) form the Guanylate kinase-like domain. 22-29 (SPSGAGKS) is an ATP binding site.

This sequence belongs to the guanylate kinase family.

Its subcellular location is the cytoplasm. It carries out the reaction GMP + ATP = GDP + ADP. Essential for recycling GMP and indirectly, cGMP. This Rhizobium meliloti (strain 1021) (Ensifer meliloti) protein is Guanylate kinase.